Reading from the N-terminus, the 1915-residue chain is Methylcytosine dioxygenase tet3-B (1915 aa).

Positions 28-49 (RLRVSEMPSELNGGGDGSKGDG) are disordered. Residues 61–102 (SNKKRKRCGVCVPCLRKEPCGTCYNCVNRSTSHQICKMRKCE) form a CXXC-type zinc finger. Zn(2+)-binding residues include Cys-68, Cys-71, Cys-74, Cys-80, Cys-83, Cys-86, Cys-96, and Cys-101. Positions 629-638 (PNSQQAPVSK) are enriched in polar residues. Disordered regions lie at residues 629-679 (PNSQ…RVKE), 776-806 (GRCPTPSTGDSSSGQGDSANQHTNLTDVPGQ), and 831-880 (FSLP…LSNN). The span at 664–676 (KPPRKQVQIKKPR) shows a compositional bias: basic residues. Residues 779–793 (PTPSTGDSSSGQGDS) show a composition bias toward low complexity. 2 stretches are compositionally biased toward polar residues: residues 838-854 (VPSQNGERPPKQQTSGV) and 864-880 (QLPSENATHSNPALSNN). Zn(2+)-binding residues include Cys-974, Cys-976, Cys-1034, His-1060, and Cys-1062. Arg-1102 provides a ligand contact to 2-oxoglutarate. Cys-1112, Cys-1114, Cys-1130, Cys-1139, and Cys-1199 together coordinate Zn(2+). Cys-1215 serves as a coordination point for 2-oxoglutarate. A Zn(2+)-binding site is contributed by His-1221. Fe cation-binding residues include His-1223 and Asp-1225. His-1257 is a binding site for 2-oxoglutarate. Disordered regions lie at residues 1298–1356 (LSEP…QTKP), 1469–1516 (GMNQ…APME), and 1719–1753 (PAVNSLKTDSSQNHWDPYSLDDNMDDGQSKSVKEE). Residues 1308–1339 (RQLDAKKATAEKKKLQKEKLVSPDKTKQEPSD) are compositionally biased toward basic and acidic residues. Over residues 1340-1355 (TKTCQQNPGVPQQQTK) the composition is skewed to polar residues. A compositionally biased stretch (basic and acidic residues) spans 1482-1491 (NYRRSSEVPH). Composition is skewed to polar residues over residues 1494–1503 (SLQNSNSQKS) and 1720–1732 (AVNSLKTDSSQNH). Residue His-1794 participates in Fe cation binding. 1809-1811 (RIS) is a binding site for 2-oxoglutarate. Residues 1827–1860 (LALWEAKMKQLAERARVKEEEAAKLGIKQEVKSL) are a coiled coil.

This sequence belongs to the TET family. Fe(2+) is required as a cofactor. Zn(2+) serves as cofactor. As to expression, detected in embryo (at protein level). Detected in embryonic head, in developing brain and eye.

It localises to the nucleus. Its subcellular location is the chromosome. It catalyses the reaction a 5-methyl-2'-deoxycytidine in DNA + 2-oxoglutarate + O2 = a 5-hydroxymethyl-2'-deoxycytidine in DNA + succinate + CO2. It carries out the reaction a 5-hydroxymethyl-2'-deoxycytidine in DNA + 2-oxoglutarate + O2 = a 5-formyl-2'-deoxycytidine in DNA + succinate + CO2 + H2O. The catalysed reaction is a 5-formyl-2'-deoxycytidine in DNA + 2-oxoglutarate + O2 = a 5-carboxyl-2'-deoxycytidine in DNA + succinate + CO2 + H(+). Dioxygenase that catalyzes the conversion of the modified genomic base 5-methylcytosine (5mC) into 5-hydroxymethylcytosine (5hmC) and plays a key role in epigenetic chromatin reprogramming during embryonic development. Conversion of 5mC into 5hmC probably constitutes the first step in cytosine demethylation. Selectively binds to the promoter region of target genes and contributes to regulate the expression of numerous developmental genes, including pax6, rax, sox9 and six3. May also contribute to the regulation of target genes in ways that do not require its enzyme activity. This chain is Methylcytosine dioxygenase tet3-B, found in Xenopus laevis (African clawed frog).